We begin with the raw amino-acid sequence, 188 residues long: Elongation factor P (188 aa).

This sequence belongs to the elongation factor P family.

It localises to the cytoplasm. Its pathway is protein biosynthesis; polypeptide chain elongation. Functionally, involved in peptide bond synthesis. Stimulates efficient translation and peptide-bond synthesis on native or reconstituted 70S ribosomes in vitro. Probably functions indirectly by altering the affinity of the ribosome for aminoacyl-tRNA, thus increasing their reactivity as acceptors for peptidyl transferase. This is Elongation factor P from Methylorubrum populi (strain ATCC BAA-705 / NCIMB 13946 / BJ001) (Methylobacterium populi).